The following is a 339-amino-acid chain: Ketol-acid reductoisomerase (NADP(+)) (339 aa).

The region spanning 1–182 (MRVYYDRDAD…GGGRAGIIET (182 aa)) is the KARI N-terminal Rossmann domain. Residues 24–27 (YGSQ), arginine 48, serine 51, threonine 53, and 83–86 (DELQ) each bind NADP(+). Histidine 108 is an active-site residue. Glycine 134 is a binding site for NADP(+). Residues 183 to 328 (SFKEECETDL…AKLREMMPWI (146 aa)) form the KARI C-terminal knotted domain. 4 residues coordinate Mg(2+): aspartate 191, glutamate 195, glutamate 227, and glutamate 231. Serine 252 contributes to the substrate binding site.

It belongs to the ketol-acid reductoisomerase family. Mg(2+) is required as a cofactor.

The enzyme catalyses (2R)-2,3-dihydroxy-3-methylbutanoate + NADP(+) = (2S)-2-acetolactate + NADPH + H(+). It carries out the reaction (2R,3R)-2,3-dihydroxy-3-methylpentanoate + NADP(+) = (S)-2-ethyl-2-hydroxy-3-oxobutanoate + NADPH + H(+). Its pathway is amino-acid biosynthesis; L-isoleucine biosynthesis; L-isoleucine from 2-oxobutanoate: step 2/4. It functions in the pathway amino-acid biosynthesis; L-valine biosynthesis; L-valine from pyruvate: step 2/4. Its function is as follows. Involved in the biosynthesis of branched-chain amino acids (BCAA). Catalyzes an alkyl-migration followed by a ketol-acid reduction of (S)-2-acetolactate (S2AL) to yield (R)-2,3-dihydroxy-isovalerate. In the isomerase reaction, S2AL is rearranged via a Mg-dependent methyl migration to produce 3-hydroxy-3-methyl-2-ketobutyrate (HMKB). In the reductase reaction, this 2-ketoacid undergoes a metal-dependent reduction by NADPH to yield (R)-2,3-dihydroxy-isovalerate. This is Ketol-acid reductoisomerase (NADP(+)) from Rhodopseudomonas palustris (strain BisB5).